A 507-amino-acid polypeptide reads, in one-letter code: Protein O-glucosyltransferase 3 (507 aa).

Residues 1 to 20 form the signal peptide; the sequence is MRRLPRALLLQLRLALLVAA. The Filamin repeat unit spans residues 24 to 134; it reads EVLVSAPRSL…VAQSPYILKG (111 aa). 2 N-linked (GlcNAc...) asparagine glycosylation sites follow: asparagine 61 and asparagine 306. The Prevents secretion from ER motif lies at 504 to 507; sequence REEL.

Belongs to the KDELC family.

The protein localises to the endoplasmic reticulum lumen. The catalysed reaction is L-seryl-[EGF-like domain protein] + UDP-alpha-D-glucose = 3-O-(beta-D-glucosyl)-L-seryl-[EGF-like domain protein] + UDP + H(+). It carries out the reaction L-seryl-[EGF-like domain protein] + UDP-alpha-D-xylose = 3-O-(beta-D-xylosyl)-L-seryl-[EGF-like domain protein] + UDP + H(+). The protein operates within protein modification; protein glycosylation. Protein glucosyltransferase that catalyzes the transfer of glucose from UDP-glucose to a serine residue within the consensus sequence peptide C-X-N-T-X-G-S-F-X-C. Can also catalyze the transfer of xylose from UDP-xylose but less efficiently. Specifically targets extracellular EGF repeats of proteins such as NOTCH1, NOTCH3, FBN1, FBN2 and LTBP1. May regulate the transport of NOTCH1 and NOTCH3 to the plasma membrane and thereby the Notch signaling pathway. This chain is Protein O-glucosyltransferase 3, found in Homo sapiens (Human).